Consider the following 861-residue polypeptide: Leucine--tRNA ligase (861 aa).

The 'HIGH' region signature appears at 42–52 (PYPSGRLHMGH). The 'KMSKS' region signature appears at 619–623 (KMSKS). Lys-622 lines the ATP pocket.

Belongs to the class-I aminoacyl-tRNA synthetase family.

The protein localises to the cytoplasm. It catalyses the reaction tRNA(Leu) + L-leucine + ATP = L-leucyl-tRNA(Leu) + AMP + diphosphate. This chain is Leucine--tRNA ligase, found in Haemophilus influenzae (strain PittEE).